Here is a 368-residue protein sequence, read N- to C-terminus: Phosphoserine aminotransferase (368 aa).

Residue Arg44 participates in L-glutamate binding. Pyridoxal 5'-phosphate contacts are provided by residues 78–79 (AT), Trp104, Thr157, Asp179, and Gln202. Lys203 carries the N6-(pyridoxal phosphate)lysine modification. 244-245 (NT) provides a ligand contact to pyridoxal 5'-phosphate.

It belongs to the class-V pyridoxal-phosphate-dependent aminotransferase family. SerC subfamily. In terms of assembly, homodimer. Pyridoxal 5'-phosphate serves as cofactor.

It localises to the cytoplasm. The enzyme catalyses O-phospho-L-serine + 2-oxoglutarate = 3-phosphooxypyruvate + L-glutamate. The catalysed reaction is 4-(phosphooxy)-L-threonine + 2-oxoglutarate = (R)-3-hydroxy-2-oxo-4-phosphooxybutanoate + L-glutamate. The protein operates within amino-acid biosynthesis; L-serine biosynthesis; L-serine from 3-phospho-D-glycerate: step 2/3. Its pathway is cofactor biosynthesis; pyridoxine 5'-phosphate biosynthesis; pyridoxine 5'-phosphate from D-erythrose 4-phosphate: step 3/5. Catalyzes the reversible conversion of 3-phosphohydroxypyruvate to phosphoserine and of 3-hydroxy-2-oxo-4-phosphonooxybutanoate to phosphohydroxythreonine. In Neisseria meningitidis serogroup B (strain ATCC BAA-335 / MC58), this protein is Phosphoserine aminotransferase.